The primary structure comprises 161 residues: DNA-binding protein inhibitor ID-4 (161 aa).

Residues 52-104 (AAEAAADEPALCLQCDMNDCYSRLRRLVPTIPPNKKVSKVEILQHVIDYILDL) form the bHLH domain.

In terms of assembly, heterodimer with other HLH proteins.

It localises to the nucleus. Functionally, transcriptional regulator (lacking a basic DNA binding domain) which negatively regulates the basic helix-loop-helix (bHLH) transcription factors by forming heterodimers and inhibiting their DNA binding and transcriptional activity. Implicated in regulating a variety of cellular processes, including cellular growth, senescence, differentiation, apoptosis, angiogenesis, and neoplastic transformation. This chain is DNA-binding protein inhibitor ID-4 (Id4), found in Mus musculus (Mouse).